Here is a 48-residue protein sequence, read N- to C-terminus: Small polypeptide DEVIL 14 (48 aa).

Residues 4–23 form a helical membrane-spanning segment; sequence TVVLRCCTSVTKVRTWKRCS. The required for DVL/RTFL small polypeptide activity stretch occupies residues 17-48; the sequence is RTWKRCSKQIKEQRARLYIIWKCAVFLLSSHD.

Belongs to the DVL/RTFL small polypeptides family.

It is found in the cell membrane. In terms of biological role, small polypeptide acting as a regulatory molecule which coordinates cellular responses required for differentiation, growth and development, probably by restricting polar cell proliferation in lateral organs and coordinating socket cell recruitment and differentiation at trichome sites. In Arabidopsis thaliana (Mouse-ear cress), this protein is Small polypeptide DEVIL 14.